The sequence spans 377 residues: DnaJ-related protein SCJ1 (377 aa).

Residues 1 to 21 form the signal peptide; that stretch reads MIPKLYIHLILSLLLLPLILA. One can recognise a J domain in the interval 23–88; that stretch reads DYYAILEIDK…EKKKIYDQFG (66 aa). The segment at 156–237 adopts a CR-type zinc-finger fold; the sequence is GSSIEFTLNL…CHGKKVTKKN (82 aa). CXXCXGXG motif repeat units lie at residues 169–176, 185–192, 211–218, and 225–232; these read CDACHGSG, CPDCQGRG, CGRCGGTG, and CKTCHGKK. The Cell attachment site motif lies at 288–290; that stretch reads RGD. The short motif at 374-377 is the Prevents secretion from ER element; the sequence is KDEL.

It localises to the endoplasmic reticulum lumen. Functionally, regulates protein folding in the endoplasmic reticulum lumen. Probably acts as a J-protein for the Hsp70-type chaperone KAR2 by stimulating its ATP-dependent reaction cycle and initiating folding reactions. Also involved in the endoplasmic reticulum-associated degradation (ERAD) process. Cooperates with KAR2 and another J-protein JEM1 to facilitate the export of ERAD substrates to the cytoplasm by maintaining them in a translocation-competent state and preventing their aggregation in the endoplasmic reticulum lumen. This chain is DnaJ-related protein SCJ1 (SCJ1), found in Saccharomyces cerevisiae (strain ATCC 204508 / S288c) (Baker's yeast).